The primary structure comprises 362 residues: Abnormal cell migration protein 13 (362 aa).

The signal sequence occupies residues 1–20; that stretch reads MTKLLIALILFSICWKPYSA. Topologically, residues 21–237 are extracellular; that stretch reads EPIASFFDGL…ELDPLTTVSG (217 aa). 2 disulfide bridges follow: Cys-36/Cys-68 and Cys-98/Cys-136. Residues 36–175 enclose the CUB domain; the sequence is CKARLDRRLT…KGFKLHWGSF (140 aa). Asn-63 is a glycosylation site (N-linked (GlcNAc...) asparagine). N-linked (GlcNAc...) asparagine glycans are attached at residues Asn-145 and Asn-161. The LDL-receptor class A domain maps to 182-225; the sequence is NCVTGEFSCGNGECIPIESACDRFADCSNGEDLIHSRQMAANCQ. 3 disulfide bridges follow: Cys-183–Cys-195, Cys-190–Cys-208, and Cys-202–Cys-224. A helical membrane pass occupies residues 238–258; the sequence is VFVLLFSATIILSLCGFIMFV. Residues 259–362 are Cytoplasmic-facing; the sequence is CCLCKCLKST…VRNDVHRNLL (104 aa). Residues 275–311 form a disordered region; sequence SSHTTTTTATDYKPDPPQFYPPSPPKMPPPSAASSYT. Positions 289 to 305 are enriched in pro residues; the sequence is DPPQFYPPSPPKMPPPS.

Interacts with abl-1 (via SH2 and SH3 domains); the interaction is direct. Interacts with sem-5; the interaction is direct. In terms of tissue distribution, expressed in pharyngeal-intestinal valve cells and ventral cord neurons.

The protein resides in the cell membrane. It is found in the perikaryon. Its subcellular location is the cell projection. The protein localises to the axon. It localises to the dendrite. Its function is as follows. Probable receptor that acts as an upstream signaling protein to promote the guidance, migration and positioning of the right Q neuroblast (QR) and its descendants along the anteroposterior body axis, and also the anterior migration of BDU interneurons during larval development. Associates with and recruits the downstream components tyrosine kinase abl-1 and the tyrosine kinase adapter protein sem-5 to the leading edge of migrating Q neuroblasts and their descendants to activate signaling through the two parallel wve-1 and wsp-1 pathways, respectively, and direct migration along the anteroposterior body axis. Involved in cytoskeleton dynamics regulating the organization of the actin cytoskeleton at the leading edge of migrating cells to ensure correct Q cell polarity and promote migration. Role in cytoskeleton organization may be by activation of the wve-1 and wsp-1 pathways which recruit the Arp2/3 complex to the leading edge of migrating cells. Plays a role in regulating the asymmetric distribution of the actin cytoskeleton-binding protein cor-1 in Q neuroblasts which is required for the anterior migration of QR neuroblasts. This Caenorhabditis elegans protein is Abnormal cell migration protein 13.